Consider the following 445-residue polypeptide: Mitochondrial-processing peptidase subunit alpha-2 (445 aa).

A mitochondrion-targeting transit peptide spans 1–13 (MIGRFIARNYTTS).

Belongs to the peptidase M16 family. As to quaternary structure, heterodimer of alpha and beta subunits, forming the mitochondrial processing protease (MPP) in which subunit alpha is involved in substrate recognition and binding and subunit beta is the catalytic subunit.

Its subcellular location is the mitochondrion matrix. Substrate recognition and binding subunit of the essential mitochondrial processing protease (MPP), which cleaves the mitochondrial sequence off newly imported precursors proteins. The polypeptide is Mitochondrial-processing peptidase subunit alpha-2 (mppA2) (Dictyostelium discoideum (Social amoeba)).